A 486-amino-acid polypeptide reads, in one-letter code: Cardiolipin synthase A (486 aa).

2 consecutive transmembrane segments (helical) span residues 3–23 (TFYT…IAGV) and 38–58 (MAWL…YLSF). PLD phosphodiesterase domains lie at 219–246 (MDLR…VDPR) and 399–426 (EGGL…DMRS). Active-site residues include His224, Lys226, Asp231, His404, Lys406, and Asp411.

The protein belongs to the phospholipase D family. Cardiolipin synthase subfamily. ClsA sub-subfamily.

Its subcellular location is the cell inner membrane. It catalyses the reaction 2 a 1,2-diacyl-sn-glycero-3-phospho-(1'-sn-glycerol) = a cardiolipin + glycerol. Its function is as follows. Catalyzes the reversible phosphatidyl group transfer from one phosphatidylglycerol molecule to another to form cardiolipin (CL) (diphosphatidylglycerol) and glycerol. This Yersinia pseudotuberculosis serotype O:1b (strain IP 31758) protein is Cardiolipin synthase A.